The chain runs to 149 residues: Protein-export protein SecB 2 (149 aa).

It belongs to the SecB family. In terms of assembly, homotetramer, a dimer of dimers. One homotetramer interacts with 1 SecA dimer.

The protein localises to the cytoplasm. In terms of biological role, one of the proteins required for the normal export of preproteins out of the cell cytoplasm. It is a molecular chaperone that binds to a subset of precursor proteins, maintaining them in a translocation-competent state. It also specifically binds to its receptor SecA. This is Protein-export protein SecB 2 from Francisella tularensis subsp. tularensis (strain FSC 198).